The primary structure comprises 235 residues: Transmembrane emp24 domain-containing protein 9 (235 aa).

The N-terminal stretch at 1–37 (MAAERSLWVVGLCPGSRLGRVVRVLLLLLWFAARGGA) is a signal peptide. Residues 38–201 (LYFHIGETEK…FRQTSESTNQ (164 aa)) are Lumenal-facing. The GOLD domain occupies 47 to 145 (KKCFIEEIPD…MLRVHLDIQV (99 aa)). Residues 121–160 (CLHSNSTKFSLFAGGMLRVHLDIQVGEHANDYAEIAAKDK) are required for interaction with STX17. N-linked (GlcNAc...) asparagine glycosylation occurs at Asn125. Positions 154–184 (EIAAKDKLSELQLRVRQLVEQVEQIQKEQNY) form a coiled coil. N6-acetyllysine is present on Lys160. The helical transmembrane segment at 202-222 (RVLWWSILQTLILVAIGVWQM) threads the bilayer. Residues 223–235 (RHLKSFFEAKKLV) lie on the Cytoplasmic side of the membrane. Residues 228-229 (FF) carry the COPII vesicle coat-binding motif. The COPI vesicle coat-binding signature appears at 228-235 (FFEAKKLV).

The protein belongs to the EMP24/GP25L family. As to quaternary structure, monomer and homodimer in endoplasmic reticulum. Predominantly monomeric and to lesser extent homodimeric in endoplasmic reticulum-Golgi intermediate compartment and cis-Golgi network. Probably oligomerizes with other members of the EMP24/GP25L family such as TMED2, TMED7 and TMED10. Interacts with TMED5. Interacts (via C-terminus) with COPG1; the interaction involves dimeric TMED9. Interacts with PTPN2 and SPAST. Interacts with STX17; the interaction is direct. In terms of processing, N-linked glycosylated containing high mannose.

It localises to the endoplasmic reticulum membrane. The protein resides in the golgi apparatus. The protein localises to the cis-Golgi network membrane. Its subcellular location is the endoplasmic reticulum-Golgi intermediate compartment membrane. It is found in the trans-Golgi network membrane. Functionally, appears to be involved in vesicular protein trafficking, mainly in the early secretory pathway. In COPI vesicle-mediated retrograde transport involved in the coatomer recruitment to membranes of the early secretory pathway. Increases coatomer-dependent activity of ARFGAP2. Thought to play a crucial role in the specific retention of p24 complexes in cis-Golgi membranes; specifically contributes to the coupled localization of TMED2 and TMED10 in the cis-Golgi network. May be involved in organization of intracellular membranes, such as of the ER-Golgi intermediate compartment and the Golgi apparatus. Involved in ER localization of PTPN2. The polypeptide is Transmembrane emp24 domain-containing protein 9 (TMED9) (Bos taurus (Bovine)).